Reading from the N-terminus, the 258-residue chain is Chaperone protein caf1M (258 aa).

A signal peptide spans 1–20; sequence MILNRLSTLGIITFGMLSFA. C121 and C160 are joined by a disulfide.

It belongs to the periplasmic pilus chaperone family.

The protein resides in the periplasm. In terms of biological role, has a stimulatory role for the envelope antigen F1 secretion. It seems to interact with the subunit polypeptide and to prevent it from digestion by a protease. This chain is Chaperone protein caf1M (caf1M), found in Yersinia pestis.